We begin with the raw amino-acid sequence, 189 residues long: Dirigent protein 21 (189 aa).

The first 19 residues, 1 to 19 (MASLYLLLLLPLFLALILA), serve as a signal peptide directing secretion. 2 N-linked (GlcNAc...) asparagine glycosylation sites follow: Asn-72 and Asn-173.

It belongs to the plant dirigent protein family. Homodimer.

It is found in the secreted. In terms of biological role, dirigent proteins impart stereoselectivity on the phenoxy radical-coupling reaction, yielding optically active lignans from two molecules of coniferyl alcohol in the biosynthesis of lignans, flavonolignans, and alkaloids and thus plays a central role in plant secondary metabolism. The sequence is that of Dirigent protein 21 (DIR21) from Arabidopsis thaliana (Mouse-ear cress).